A 784-amino-acid polypeptide reads, in one-letter code: LPS-assembly protein LptD (784 aa).

Positions 1-24 are cleaved as a signal peptide; it reads MKKRIPTLLATMIATALYSQQGLA. 2 disulfides stabilise this stretch: Cys-31-Cys-724 and Cys-173-Cys-725.

Belongs to the LptD family. In terms of assembly, component of the lipopolysaccharide transport and assembly complex. Interacts with LptE and LptA. Post-translationally, contains two intramolecular disulfide bonds.

The protein resides in the cell outer membrane. Functionally, together with LptE, is involved in the assembly of lipopolysaccharide (LPS) at the surface of the outer membrane. The protein is LPS-assembly protein LptD of Escherichia coli O157:H7.